The following is a 418-amino-acid chain: Putative ion-transport protein YfeO (418 aa).

Transmembrane regions (helical) follow at residues 10–30, 54–74, 99–119, 120–140, 149–169, 186–206, 223–243, 258–278, 300–320, 322–342, 343–363, and 371–391; these read LLLS…LIMV, DSPL…GLVI, ALPG…SLGP, EHPI…RLLP, ILAS…AALI, LFAP…FFHP, ILSG…AVWC, VFVL…GGPV, DYFL…ASGF, GGRI…LHEH, VPAV…VLVV, and LFMA…CIVM.

The protein belongs to the chloride channel (TC 2.A.49) family.

The protein resides in the cell membrane. In Escherichia coli O127:H6 (strain E2348/69 / EPEC), this protein is Putative ion-transport protein YfeO.